The sequence spans 305 residues: Methionyl-tRNA formyltransferase (305 aa).

(6S)-5,6,7,8-tetrahydrofolate is bound at residue 109-112 (SLLP).

The protein belongs to the Fmt family.

The catalysed reaction is L-methionyl-tRNA(fMet) + (6R)-10-formyltetrahydrofolate = N-formyl-L-methionyl-tRNA(fMet) + (6S)-5,6,7,8-tetrahydrofolate + H(+). Its function is as follows. Attaches a formyl group to the free amino group of methionyl-tRNA(fMet). The formyl group appears to play a dual role in the initiator identity of N-formylmethionyl-tRNA by promoting its recognition by IF2 and preventing the misappropriation of this tRNA by the elongation apparatus. This Roseobacter denitrificans (strain ATCC 33942 / OCh 114) (Erythrobacter sp. (strain OCh 114)) protein is Methionyl-tRNA formyltransferase.